Reading from the N-terminus, the 124-residue chain is Small ribosomal subunit protein uS12 (124 aa).

3-methylthioaspartic acid is present on Asp-89.

The protein belongs to the universal ribosomal protein uS12 family. As to quaternary structure, part of the 30S ribosomal subunit. Contacts proteins S8 and S17. May interact with IF1 in the 30S initiation complex.

With S4 and S5 plays an important role in translational accuracy. In terms of biological role, interacts with and stabilizes bases of the 16S rRNA that are involved in tRNA selection in the A site and with the mRNA backbone. Located at the interface of the 30S and 50S subunits, it traverses the body of the 30S subunit contacting proteins on the other side and probably holding the rRNA structure together. The combined cluster of proteins S8, S12 and S17 appears to hold together the shoulder and platform of the 30S subunit. In Pasteurella multocida (strain Pm70), this protein is Small ribosomal subunit protein uS12.